A 198-amino-acid chain; its full sequence is Photosystem I assembly protein Ycf4 (198 aa).

Residues Met1–Ser20 form a disordered region. A run of 2 helical transmembrane segments spans residues Tyr36–Leu58 and Leu78–Trp100.

The protein belongs to the Ycf4 family.

The protein resides in the cellular thylakoid membrane. In terms of biological role, seems to be required for the assembly of the photosystem I complex. The polypeptide is Photosystem I assembly protein Ycf4 (Nostoc sp. (strain PCC 7120 / SAG 25.82 / UTEX 2576)).